Reading from the N-terminus, the 250-residue chain is Replicating protein (250 aa).

Disordered regions lie at residues 1-23 and 168-250; these read MFQQIGAVQAKSGTDEPAHPCEK and KAHM…KAFE. 2 stretches are compositionally biased toward basic and acidic residues: residues 13–23 and 178–190; these read GTDEPAHPCEK and DRLRETVEDRTRA. Positions 218 to 237 are enriched in polar residues; the sequence is SRCSFTTPNRPRRTLPSSHP.

Its function is as follows. Required for replication. It likely regulates pTAR copy number. This chain is Replicating protein (repA), found in Rhizobium radiobacter (Agrobacterium tumefaciens).